The sequence spans 231 residues: Probable amino-acid ABC transporter permease protein y4tG (231 aa).

A run of 6 helical transmembrane segments spans residues 9 to 29 (TGNG…MGLI), 32 to 52 (LQAA…FAVL), 64 to 84 (AAVL…FFLY), 86 to 106 (VLPE…ALGI), 161 to 181 (YLVS…VEML), and 196 to 216 (VPLS…SALV). The ABC transmembrane type-1 domain occupies 28 to 217 (LITTLQAAFL…LTIVASALVR (190 aa)).

Belongs to the binding-protein-dependent transport system permease family. HisMQ subfamily.

It is found in the cell inner membrane. Its function is as follows. Probably part of the binding-protein-dependent transport system y4tEFGH for an amino acid. Probably responsible for the translocation of the substrate across the membrane. In Sinorhizobium fredii (strain NBRC 101917 / NGR234), this protein is Probable amino-acid ABC transporter permease protein y4tG.